The following is a 33-amino-acid chain: Cytochrome b6-f complex subunit 8 (33 aa).

The chain crosses the membrane as a helical span at residues leucine 2–valine 22.

It belongs to the PetN family. The 4 large subunits of the cytochrome b6-f complex are cytochrome b6, subunit IV (17 kDa polypeptide, PetD), cytochrome f and the Rieske protein, while the 4 small subunits are PetG, PetL, PetM and PetN. The complex functions as a dimer.

The protein resides in the cellular thylakoid membrane. Functionally, component of the cytochrome b6-f complex, which mediates electron transfer between photosystem II (PSII) and photosystem I (PSI), cyclic electron flow around PSI, and state transitions. This Parasynechococcus marenigrum (strain WH8102) protein is Cytochrome b6-f complex subunit 8.